Here is a 411-residue protein sequence, read N- to C-terminus: Proline-responsive transcriptional activator PutR (411 aa).

This sequence belongs to the CdaR family.

Activates transcription of the putBCP operon. Requires proline as a coactivator. This Bacillus subtilis (strain 168) protein is Proline-responsive transcriptional activator PutR.